A 297-amino-acid polypeptide reads, in one-letter code: ATP synthase subunit gamma, mitochondrial (297 aa).

This sequence belongs to the ATPase gamma chain family. In terms of assembly, F-type ATPases have 2 components, CF(1) - the catalytic core - and CF(0) - the membrane proton channel. CF(1) has five subunits: alpha(3), beta(3), gamma(1), delta(1), epsilon(1). CF(0) has three main subunits: a, b and c.

It is found in the mitochondrion. Its subcellular location is the mitochondrion inner membrane. Its function is as follows. Mitochondrial membrane ATP synthase (F(1)F(0) ATP synthase or Complex V) produces ATP from ADP in the presence of a proton gradient across the membrane which is generated by electron transport complexes of the respiratory chain. F-type ATPases consist of two structural domains, F(1) - containing the extramembraneous catalytic core, and F(0) - containing the membrane proton channel, linked together by a central stalk and a peripheral stalk. During catalysis, ATP synthesis in the catalytic domain of F(1) is coupled via a rotary mechanism of the central stalk subunits to proton translocation. Part of the complex F(1) domain and the central stalk which is part of the complex rotary element. The gamma subunit protrudes into the catalytic domain formed of alpha(3)beta(3). Rotation of the central stalk against the surrounding alpha(3)beta(3) subunits leads to hydrolysis of ATP in three separate catalytic sites on the beta subunits. This is ATP synthase subunit gamma, mitochondrial from Drosophila melanogaster (Fruit fly).